The chain runs to 138 residues: Chorion protein S16 (138 aa).

The signal sequence occupies residues 1 to 20 (MSATLRLLCLMACCVALAVA).

The protein belongs to the chorion protein S16 family.

It localises to the secreted. Chorion membrane (egg shell) protein; plays a role in protecting the egg from the environment. The sequence is that of Chorion protein S16 (Cp16) from Drosophila melanogaster (Fruit fly).